Consider the following 475-residue polypeptide: Methyltransferase-like protein 25B (475 aa).

Residues 186–210 (QRLVERAQRLDQELLQTLEKEEKRN) are a coiled coil. The chain crosses the membrane as a helical span at residues 406-426 (VVAFFSLALLLAPLVETLILL).

The protein belongs to the METTL25 family.

It localises to the membrane. The sequence is that of Methyltransferase-like protein 25B from Bos taurus (Bovine).